Here is a 500-residue protein sequence, read N- to C-terminus: MKMINQDTICAIATAQGGAIGIIRVSGPKAIEITSRIFTPATGKPLTERAPYTLTFGKICSPKRKINNTLFQQTSEIPQEKSETLQKTSSITSSAEEVIDEVLISLFRAPHSYTGEDSTEIMCHGSSYILQQVIQLLIYNGCRAALPGEYTQRAFLNGKMDLSQAEAVADLIASSSASTHRLAMSQMRGGFSKELSNLRNQLLHFTSLMELELDFSDHEELEFANRDELSSLATHIEQVIARLAHSFSVGNAIKNGIPVAIIGETNAGKSTLLNALLNEEKAIVSDIHGTTRDVIEDTINLQGVTFRFIDTAGIRQTNDTIENLGIERTFQKMDQAYVILWMIDSTDAQRRFEELKADILPHCEGKKMIILFNKSDLLLATQKEELSAIFADMKVEKLFISAKKRENITILEKKLVQAAALPEVNQNDIIITNVRHYEALTRALDSIHRVQEGLQLELSGDLVSEDLRQCIHELSEIVAEGGITSEETLQNIFQNFCIGK.

Positions 24, 120, and 159 each coordinate (6S)-5-formyl-5,6,7,8-tetrahydrofolate. The 165-residue stretch at 256 to 420 (GIPVAIIGET…LEKKLVQAAA (165 aa)) folds into the TrmE-type G domain. Asn-266 provides a ligand contact to K(+). GTP-binding positions include 266 to 271 (NAGKST), 285 to 291 (SDIHGTT), and 310 to 313 (DTAG). Mg(2+) is bound at residue Ser-270. 3 residues coordinate K(+): Ser-285, Ile-287, and Thr-290. Thr-291 serves as a coordination point for Mg(2+). Lys-500 serves as a coordination point for (6S)-5-formyl-5,6,7,8-tetrahydrofolate.

Belongs to the TRAFAC class TrmE-Era-EngA-EngB-Septin-like GTPase superfamily. TrmE GTPase family. In terms of assembly, homodimer. Heterotetramer of two MnmE and two MnmG subunits. The cofactor is K(+).

The protein resides in the cytoplasm. Its function is as follows. Exhibits a very high intrinsic GTPase hydrolysis rate. Involved in the addition of a carboxymethylaminomethyl (cmnm) group at the wobble position (U34) of certain tRNAs, forming tRNA-cmnm(5)s(2)U34. The polypeptide is tRNA modification GTPase MnmE (Phocaeicola vulgatus (strain ATCC 8482 / DSM 1447 / JCM 5826 / CCUG 4940 / NBRC 14291 / NCTC 11154) (Bacteroides vulgatus)).